The chain runs to 215 residues: Reticulon-like protein B14 (215 aa).

In terms of domain architecture, Reticulon spans phenylalanine 31–threonine 211. Helical transmembrane passes span lysine 41–glutamate 61, tyrosine 62–tryptophan 82, and leucine 141–phenylalanine 161.

Its subcellular location is the endoplasmic reticulum membrane. This chain is Reticulon-like protein B14 (RTNLB14), found in Arabidopsis thaliana (Mouse-ear cress).